Consider the following 506-residue polypeptide: RNA-splicing ligase RtcB homolog 1 (506 aa).

Residues aspartate 120, cysteine 123, histidine 228, histidine 260, and histidine 354 each contribute to the Mn(2+) site. Asparagine 227–glutamate 231 is a GMP binding site. Residues histidine 354–asparagine 355, glycine 403–methionine 406, serine 410, histidine 429–glycine 432, and lysine 505 contribute to the GMP site. Histidine 429 (GMP-histidine intermediate) is an active-site residue.

The protein belongs to the RtcB family. Catalytic component of the tRNA-splicing ligase complex. Mn(2+) serves as cofactor.

The enzyme catalyses a 3'-end 3'-phospho-ribonucleotide-RNA + a 5'-end dephospho-ribonucleoside-RNA + GTP = a ribonucleotidyl-ribonucleotide-RNA + GMP + diphosphate. The catalysed reaction is a 3'-end 2',3'-cyclophospho-ribonucleotide-RNA + a 5'-end dephospho-ribonucleoside-RNA + GTP + H2O = a ribonucleotidyl-ribonucleotide-RNA + GMP + diphosphate + H(+). Catalytic subunit of the tRNA-splicing ligase complex that acts by directly joining spliced tRNA halves to mature-sized tRNAs by incorporating the precursor-derived splice junction phosphate into the mature tRNA as a canonical 3',5'-phosphodiester. May act as an RNA ligase with broad substrate specificity, and may function toward other RNAs. The sequence is that of RNA-splicing ligase RtcB homolog 1 from Culex quinquefasciatus (Southern house mosquito).